The following is a 343-amino-acid chain: CRISPR-associated endonuclease Cas1 1 (343 aa).

Mn(2+)-binding residues include Glu-166, His-234, and Glu-249.

Belongs to the CRISPR-associated endonuclease Cas1 family. In terms of assembly, homodimer, forms a heterotetramer with a Cas2 homodimer. It depends on Mg(2+) as a cofactor. Mn(2+) is required as a cofactor.

CRISPR (clustered regularly interspaced short palindromic repeat), is an adaptive immune system that provides protection against mobile genetic elements (viruses, transposable elements and conjugative plasmids). CRISPR clusters contain spacers, sequences complementary to antecedent mobile elements, and target invading nucleic acids. CRISPR clusters are transcribed and processed into CRISPR RNA (crRNA). Acts as a dsDNA endonuclease. Involved in the integration of spacer DNA into the CRISPR cassette. The sequence is that of CRISPR-associated endonuclease Cas1 1 from Moorella thermoacetica (strain ATCC 39073 / JCM 9320).